The following is a 147-amino-acid chain: MYPAHLLILSAVCVSLLGAANIPPHPLNLINFMNMIRYTIPCEKTWGEYTNYGCYCGAGGSGTPIDALDRCCYVHDNCYGDAEKIHKCSPKTQSYSYKLTRRTIICYGAAGTCARIVCDCDRTAALCFGDSEYIEGHKRIDTKRYCQ.

A signal peptide spans 1–19 (MYPAHLLILSAVCVSLLGA). Positions 20–27 (ANIPPHPL) are excised as a propeptide. Disulfide bonds link C54–C146, C56–C72, C71–C127, C78–C120, C88–C113, and C106–C118. Residues Y55, G57, and G59 each coordinate Ca(2+). H75 is an active-site residue. D76 contacts Ca(2+). D121 is an active-site residue.

This sequence belongs to the phospholipase A2 family. Group I subfamily. D49 sub-subfamily. In terms of assembly, heterodimer; disulfide-linked. The A chains have phospholipase A2 activity and the B chains show homology with the basic protease inhibitors. It depends on Ca(2+) as a cofactor. Expressed by the venom gland.

It is found in the secreted. The enzyme catalyses a 1,2-diacyl-sn-glycero-3-phosphocholine + H2O = a 1-acyl-sn-glycero-3-phosphocholine + a fatty acid + H(+). In terms of biological role, snake venom phospholipase A2 (PLA2) that inhibits neuromuscular transmission by blocking acetylcholine release from the nerve termini. PLA2 catalyzes the calcium-dependent hydrolysis of the 2-acyl groups in 3-sn-phosphoglycerides. This is Basic phospholipase A2 beta-bungarotoxin A1 chain from Bungarus caeruleus (Indian krait).